Consider the following 366-residue polypeptide: UDP-N-acetylglucosamine--N-acetylmuramyl-(pentapeptide) pyrophosphoryl-undecaprenol N-acetylglucosamine transferase (366 aa).

Residues 22-24, N134, R170, S198, I253, and Q298 each bind UDP-N-acetyl-alpha-D-glucosamine; that span reads TGG.

This sequence belongs to the glycosyltransferase 28 family. MurG subfamily.

The protein resides in the cell inner membrane. It carries out the reaction di-trans,octa-cis-undecaprenyl diphospho-N-acetyl-alpha-D-muramoyl-L-alanyl-D-glutamyl-meso-2,6-diaminopimeloyl-D-alanyl-D-alanine + UDP-N-acetyl-alpha-D-glucosamine = di-trans,octa-cis-undecaprenyl diphospho-[N-acetyl-alpha-D-glucosaminyl-(1-&gt;4)]-N-acetyl-alpha-D-muramoyl-L-alanyl-D-glutamyl-meso-2,6-diaminopimeloyl-D-alanyl-D-alanine + UDP + H(+). The protein operates within cell wall biogenesis; peptidoglycan biosynthesis. Functionally, cell wall formation. Catalyzes the transfer of a GlcNAc subunit on undecaprenyl-pyrophosphoryl-MurNAc-pentapeptide (lipid intermediate I) to form undecaprenyl-pyrophosphoryl-MurNAc-(pentapeptide)GlcNAc (lipid intermediate II). The polypeptide is UDP-N-acetylglucosamine--N-acetylmuramyl-(pentapeptide) pyrophosphoryl-undecaprenol N-acetylglucosamine transferase (Xylella fastidiosa (strain M12)).